The sequence spans 156 residues: Small ribosomal subunit protein uS7 (156 aa).

Belongs to the universal ribosomal protein uS7 family. Part of the 30S ribosomal subunit. Contacts proteins S9 and S11.

Its function is as follows. One of the primary rRNA binding proteins, it binds directly to 16S rRNA where it nucleates assembly of the head domain of the 30S subunit. Is located at the subunit interface close to the decoding center, probably blocks exit of the E-site tRNA. The protein is Small ribosomal subunit protein uS7 of Alcanivorax borkumensis (strain ATCC 700651 / DSM 11573 / NCIMB 13689 / SK2).